The sequence spans 110 residues: UPF0145 protein BLD_1357 (110 aa).

It belongs to the UPF0145 family.

The polypeptide is UPF0145 protein BLD_1357 (Bifidobacterium longum (strain DJO10A)).